Here is a 421-residue protein sequence, read N- to C-terminus: MSRQMWLDTSALLEAISEYVVRCNGDTFSGLTTGDFNALSNMFTQLSVSSAGYVSDPRVPLQTMSNMFVSFITSTDRCGYMLGKTWFNSDTKPTVSDDFITAYIKPRLQVPMSDTVRQLNNLSLQPSAKPKLYERQNAIMKGLDIPYSEPIEPCKLFRSVAGQTGNIPLMGILLTPPVAQQQPFFVAERRRILFGIRSNAAIPAGAYQFVVPAWASVLSVTGAYVYFTNSFFGTTIAGVTATATAADAATTFTVPTDANNLPVQTDSRLSFSLGGGNINLELGVAKTGFCVAIEGEFTILANRSQAYYTLNSITQTPTSIDDFDVSDFLTTFLSQLRACGQYEIFSDAMDQLTNNLITNYMDPPAIPAGLAFTSPWFRFSERARTILALQNVDLNIRKLMVRHLWVITSLIAVFGRYYRPN.

Belongs to the phytoreovirus outer capsid protein P8 family. In terms of assembly, homotrimer. Homomultimer. Interacts with host peroxisomal glycolate oxidase (GOX). This interaction mediates its relocation to virus factories peripheral to host peroxisomes.

It localises to the virion. Its subcellular location is the host cytoplasm. In terms of biological role, capsid protein which self-assembles to form the outer icosahedral capsid with a T=13 symmetry, about 70 nm in diameter and consisting of 780 molecules capsid proteins. This Alopecurus aequalis (Barnyard grass) protein is Outer capsid protein P8.